A 162-amino-acid chain; its full sequence is Cytochrome B pre-mRNA-processing protein 6 (162 aa).

An N-acetylserine modification is found at S2. T97 is modified (phosphothreonine).

It is found in the mitochondrion. Functionally, this protein is involved in processing of the 5' terminus and the intervening sequences of cytochrome b pre-mRNA. In Saccharomyces cerevisiae (strain ATCC 204508 / S288c) (Baker's yeast), this protein is Cytochrome B pre-mRNA-processing protein 6 (CBP6).